A 454-amino-acid chain; its full sequence is Toluate 1,2-dioxygenase subunit alpha (454 aa).

The Rieske domain occupies 51 to 148 (IYLAHESQIP…SFDCDGSHDL (98 aa)). The [2Fe-2S] cluster site is built by cysteine 92, histidine 94, cysteine 112, and histidine 115. Fe cation is bound by residues histidine 221 and histidine 226.

It belongs to the bacterial ring-hydroxylating dioxygenase alpha subunit family. In terms of assembly, this dioxygenase system consists of three proteins: the two subunits of the hydroxylase component (XylX and XylY), and an electron transfer component (XylZ). [2Fe-2S] cluster is required as a cofactor. Fe cation serves as cofactor.

It participates in xenobiotic degradation; toluene degradation. The chain is Toluate 1,2-dioxygenase subunit alpha (xylX) from Pseudomonas putida (Arthrobacter siderocapsulatus).